Here is a 476-residue protein sequence, read N- to C-terminus: UDP-N-acetylmuramate--L-alanine ligase (476 aa).

121 to 127 (GAHGKTT) is a binding site for ATP.

This sequence belongs to the MurCDEF family.

The protein resides in the cytoplasm. It carries out the reaction UDP-N-acetyl-alpha-D-muramate + L-alanine + ATP = UDP-N-acetyl-alpha-D-muramoyl-L-alanine + ADP + phosphate + H(+). It participates in cell wall biogenesis; peptidoglycan biosynthesis. Functionally, cell wall formation. The chain is UDP-N-acetylmuramate--L-alanine ligase from Clavibacter michiganensis subsp. michiganensis (strain NCPPB 382).